A 137-amino-acid chain; its full sequence is Peptide methionine sulfoxide reductase MsrB (137 aa).

A MsrB domain is found at 7–129 (AEELKKKLSE…NSASLAFSDE (123 aa)). Positions 46, 49, 95, and 98 each coordinate Zn(2+). The active-site Nucleophile is Cys118.

The protein belongs to the MsrB Met sulfoxide reductase family. Zn(2+) serves as cofactor.

It carries out the reaction L-methionyl-[protein] + [thioredoxin]-disulfide + H2O = L-methionyl-(R)-S-oxide-[protein] + [thioredoxin]-dithiol. This is Peptide methionine sulfoxide reductase MsrB from Salmonella agona (strain SL483).